The primary structure comprises 331 residues: Adenosine deaminase (331 aa).

Positions 12 and 14 each coordinate Zn(2+). His-14 and Asp-16 together coordinate substrate. Residue His-197 participates in Zn(2+) binding. Glu-200 functions as the Proton donor in the catalytic mechanism. Residue Asp-278 coordinates Zn(2+).

Belongs to the metallo-dependent hydrolases superfamily. Adenosine and AMP deaminases family. Adenosine deaminase subfamily. The cofactor is Zn(2+).

It catalyses the reaction adenosine + H2O + H(+) = inosine + NH4(+). The enzyme catalyses 2'-deoxyadenosine + H2O + H(+) = 2'-deoxyinosine + NH4(+). In terms of biological role, catalyzes the hydrolytic deamination of adenosine and 2-deoxyadenosine. This chain is Adenosine deaminase, found in Shewanella pealeana (strain ATCC 700345 / ANG-SQ1).